Reading from the N-terminus, the 124-residue chain is Large ribosomal subunit protein uL18 (124 aa).

Belongs to the universal ribosomal protein uL18 family. In terms of assembly, part of the 50S ribosomal subunit; part of the 5S rRNA/L5/L18/L25 subcomplex. Contacts the 5S and 23S rRNAs.

In terms of biological role, this is one of the proteins that bind and probably mediate the attachment of the 5S RNA into the large ribosomal subunit, where it forms part of the central protuberance. The sequence is that of Large ribosomal subunit protein uL18 from Aquifex aeolicus (strain VF5).